The sequence spans 33 residues: Photosystem II reaction center protein Psb30 (33 aa).

The chain crosses the membrane as a helical span at residues 5–25 (IVFQLTALLFVVAAGPLVIVL).

It belongs to the Psb30/Ycf12 family. PSII is composed of 1 copy each of membrane proteins PsbA, PsbB, PsbC, PsbD, PsbE, PsbF, PsbH, PsbI, PsbJ, PsbK, PsbL, PsbM, PsbT, PsbX, PsbY, PsbZ, Psb30/Ycf12, peripheral proteins of the oxygen-evolving complex and a large number of cofactors. It forms dimeric complexes.

The protein resides in the plastid. It is found in the chloroplast thylakoid membrane. Its function is as follows. A core subunit of photosystem II (PSII), probably helps stabilize the reaction center. The polypeptide is Photosystem II reaction center protein Psb30 (Chlorella vulgaris (Green alga)).